The following is a 94-amino-acid chain: Co-chaperonin GroES (94 aa).

It belongs to the GroES chaperonin family. In terms of assembly, heptamer of 7 subunits arranged in a ring. Interacts with the chaperonin GroEL.

The protein resides in the cytoplasm. Its function is as follows. Together with the chaperonin GroEL, plays an essential role in assisting protein folding. The GroEL-GroES system forms a nano-cage that allows encapsulation of the non-native substrate proteins and provides a physical environment optimized to promote and accelerate protein folding. GroES binds to the apical surface of the GroEL ring, thereby capping the opening of the GroEL channel. This chain is Co-chaperonin GroES, found in Pediococcus pentosaceus (strain ATCC 25745 / CCUG 21536 / LMG 10740 / 183-1w).